The following is a 289-amino-acid chain: Arabinogalactan O-methyltransferase 1 (289 aa).

The helical transmembrane segment at 12–32 threads the bilayer; it reads IITGVLLAGLVGGALLFTSFI.

The protein belongs to the methyltransferase superfamily. In terms of assembly, binds to the translation initiation factors TIF3E1.

Its subcellular location is the golgi apparatus membrane. In terms of biological role, involved in the methylation of glucuronic acid of different plant cell wall component, but mainly on side chains of arabinogalactans. The polypeptide is Arabinogalactan O-methyltransferase 1 (AGM1) (Arabidopsis thaliana (Mouse-ear cress)).